A 218-amino-acid polypeptide reads, in one-letter code: 1-Cys peroxiredoxin PER1 (218 aa).

The region spanning 4–164 (LTIGDTVPNL…VVRAVDSLLT (161 aa)) is the Thioredoxin domain. Cysteine 46 (cysteine sulfenic acid (-SOH) intermediate) is an active-site residue. The Bipartite nuclear localization signal motif lies at 194–217 (KKMFPQGFETADLPSKKGYLRFTK).

Belongs to the peroxiredoxin family. Prx6 subfamily. Embryo and aleurone cells.

It is found in the nucleus. The protein resides in the cytoplasm. The enzyme catalyses a hydroperoxide + [thioredoxin]-dithiol = an alcohol + [thioredoxin]-disulfide + H2O. Functionally, thiol-specific peroxidase that catalyzes the reduction of hydrogen peroxide and organic hydroperoxides to water and alcohols, respectively. Seems to contribute to the inhibition of germination during stress. This is 1-Cys peroxiredoxin PER1 (PER1) from Hordeum vulgare (Barley).